Consider the following 115-residue polypeptide: Protein VCF2 (115 aa).

Over residues 1-12 (MGGCPVRKRRRN) the composition is skewed to basic residues. A disordered region spans residues 1-70 (MGGCPVRKRR…GPEGNLNQIV (70 aa)). The span at 33-44 (FQDSQDTEFSWS) shows a compositional bias: polar residues.

It belongs to the VCF family.

In Homo sapiens (Human), this protein is Protein VCF2.